The sequence spans 46 residues: Diuretic hormone (46 aa).

Isoleucine amide is present on isoleucine 46.

This sequence belongs to the sauvagine/corticotropin-releasing factor/urotensin I family.

The protein resides in the secreted. Functionally, regulation of fluid secretion. Stimulates primary urine secretion by Malpighian tubules and causes a dose-dependent stimulation of cAMP levels in the tubules. The protein is Diuretic hormone of Periplaneta americana (American cockroach).